Consider the following 231-residue polypeptide: Large ribosomal subunit protein uL1 (231 aa).

It belongs to the universal ribosomal protein uL1 family. In terms of assembly, part of the 50S ribosomal subunit.

Functionally, binds directly to 23S rRNA. The L1 stalk is quite mobile in the ribosome, and is involved in E site tRNA release. In terms of biological role, protein L1 is also a translational repressor protein, it controls the translation of the L11 operon by binding to its mRNA. The chain is Large ribosomal subunit protein uL1 from Nitrosomonas eutropha (strain DSM 101675 / C91 / Nm57).